A 623-amino-acid chain; its full sequence is V-type proton ATPase catalytic subunit A (623 aa).

252–259 contacts ATP; it reads GAFGCGKT.

Belongs to the ATPase alpha/beta chains family. In terms of assembly, V-ATPase is a heteromultimeric enzyme composed of a peripheral catalytic V1 complex (main components: subunits A, B, C, D, E, and F) attached to an integral membrane V0 proton pore complex (main component: the proteolipid protein).

The enzyme catalyses ATP + H2O + 4 H(+)(in) = ADP + phosphate + 5 H(+)(out). In terms of biological role, catalytic subunit of the peripheral V1 complex of vacuolar ATPase. V-ATPase vacuolar ATPase is responsible for acidifying a variety of intracellular compartments in eukaryotic cells. This Vigna radiata var. radiata (Mung bean) protein is V-type proton ATPase catalytic subunit A.